Here is a 119-residue protein sequence, read N- to C-terminus: SGSCEFKTCWKAMPPFRKVGNVLKEKFDGATEVEQSEIGSTKVLVPKNSQFKPHTDEDLVYLDSSPDFCDHDLKNGVLGTSGRQCNKTSKAIDGCELMCCGRGFHTDEVEVVERCSCKF.

Ser-1 carries O-palmitoleoyl serine; by PORCN lipidation. Intrachain disulfides connect Cys-69–Cys-100 and Cys-85–Cys-95. Asn-86 is a glycosylation site (N-linked (GlcNAc...) asparagine).

This sequence belongs to the Wnt family. Post-translationally, palmitoleoylation is required for efficient binding to frizzled receptors. Depalmitoleoylation leads to Wnt signaling pathway inhibition.

The protein resides in the secreted. It localises to the extracellular space. Its subcellular location is the extracellular matrix. Ligand for members of the frizzled family of seven transmembrane receptors. Plays an important role in embryonic development. This Meleagris gallopavo (Wild turkey) protein is Protein Wnt-4 (WNT4).